Consider the following 123-residue polypeptide: Large ribosomal subunit protein uL14 (123 aa).

It belongs to the universal ribosomal protein uL14 family. Part of the 50S ribosomal subunit. Forms a cluster with proteins L3 and L19. In the 70S ribosome, L14 and L19 interact and together make contacts with the 16S rRNA in bridges B5 and B8.

Its function is as follows. Binds to 23S rRNA. Forms part of two intersubunit bridges in the 70S ribosome. The polypeptide is Large ribosomal subunit protein uL14 (Histophilus somni (strain 129Pt) (Haemophilus somnus)).